A 170-amino-acid chain; its full sequence is UPF0201 protein MJ1564 (170 aa).

Acidic residues predominate over residues 133–148 (NEDELEEEEEKEDSEE). Positions 133 to 170 (NEDELEEEEEKEDSEEIKEGHKEENNLKIKVIDNSSGD) are disordered. Residues 149–163 (IKEGHKEENNLKIKV) show a composition bias toward basic and acidic residues.

The protein belongs to the UPF0201 family.

This is UPF0201 protein MJ1564 from Methanocaldococcus jannaschii (strain ATCC 43067 / DSM 2661 / JAL-1 / JCM 10045 / NBRC 100440) (Methanococcus jannaschii).